The chain runs to 216 residues: Somatotropin (216 aa).

The signal sequence occupies residues 1–26 (MAAGPRTSVLLAFGLLCLPWPQDVGA). A Zn(2+)-binding site is contributed by histidine 45. Cysteine 78 and cysteine 189 are oxidised to a cystine. Serine 131 is modified (phosphoserine). Residue glutamate 198 coordinates Zn(2+). Cysteine 206 and cysteine 214 are disulfide-bonded.

It belongs to the somatotropin/prolactin family.

The protein resides in the secreted. Its function is as follows. Plays an important role in growth control. Its major role in stimulating body growth is to stimulate the liver and other tissues to secrete IGF1. It stimulates both the differentiation and proliferation of myoblasts. It also stimulates amino acid uptake and protein synthesis in muscle and other tissues. This is Somatotropin (GH1) from Equus caballus (Horse).